Here is a 680-residue protein sequence, read N- to C-terminus: uncharacterized protein (680 aa).

Belongs to the HyuA family.

This is an uncharacterized protein from Methanocaldococcus jannaschii (strain ATCC 43067 / DSM 2661 / JAL-1 / JCM 10045 / NBRC 100440) (Methanococcus jannaschii).